A 249-amino-acid polypeptide reads, in one-letter code: 2-C-methyl-D-erythritol 4-phosphate cytidylyltransferase (249 aa).

Belongs to the IspD/TarI cytidylyltransferase family. IspD subfamily.

It carries out the reaction 2-C-methyl-D-erythritol 4-phosphate + CTP + H(+) = 4-CDP-2-C-methyl-D-erythritol + diphosphate. It participates in isoprenoid biosynthesis; isopentenyl diphosphate biosynthesis via DXP pathway; isopentenyl diphosphate from 1-deoxy-D-xylulose 5-phosphate: step 2/6. Catalyzes the formation of 4-diphosphocytidyl-2-C-methyl-D-erythritol from CTP and 2-C-methyl-D-erythritol 4-phosphate (MEP). The polypeptide is 2-C-methyl-D-erythritol 4-phosphate cytidylyltransferase (Chromohalobacter salexigens (strain ATCC BAA-138 / DSM 3043 / CIP 106854 / NCIMB 13768 / 1H11)).